A 949-amino-acid chain; its full sequence is MMTSNILSRFLPPNNSPSVYEAIRQNDADSDSSDVEERAGLTLEDGHGGHYTDHELQDAMVDADQSELPSPDDAFLARESHHRVPSEGPSKSTSRRRKNSRPRWMQAASPGQDFEYGDDDDVPASLLVEGHHDDEDLKSRLPPPPRPLSPHEIQPSLPGPSSQGDQARWRAARDQQPLHNASRRRPPGVKWSLGQPNLNTVDPKEKAMWMWANVDNLDNFLKEVYSYFLGNGIWSILLTRVLSLLTFAFVVGFSTFLTNCVNYHKVRGSKTLDDILVDRCTTKMSLSSTFLLWLLTFFWIGKAFQCLLGIRRLKHMHDFYHYLLGVSDTDIQTISWQEVVSRLMTLRDANPATAGAVSARHRKFMGSQSKQRMDAHDIANRLMRKENYLIALVNKDILDLTLPIPFLRNRPLFSQTLEWNLNLCIMDYVFNEQGQVRTLFLKDTHRKALSEGLRRRFIFAGFMNIFVAPFIVVYFMMHYFFRYFNEYKKNPSQIGSRQYTPLAEWKFREFNELWHLFERRINMSYPFASRYVDQFPKDKTVQVAGFVAFVSGALASVLALASVVDPELFLGFEITHDRTVLFYLGVFGSVWAVARGMVPEETNVFDPEYALLEVINYTHYFPSQWKGRLHSDEVRREFAELYQMKIVIFLEEILSMIFTPFILWFSLPRCSDRLIDFFREFTVHVDGMGYLCSFAVFDFKKGTNVITQGDRREPARQDLRADYFATKDGKMLASYYGFLDNYGANPRGAHPSTKRQFHPPPAFPTLGSPSAMDLGHLGDRADPPQARPFAGQQSTFGPSRFGPTGLADHGSPAPSMLLDPHHQPSASGFRTAHRTAFSRYRSSRAAPPISGAILDDDESPSAPNRNGSARSAAGAPAPPGGSSGGGVGASDSNLEDSWRMNLTGDTDDEDAGAGGENADAIAGGAGVLGLIQQFQRVNQDGRGRTAVGL.

The interval 1–197 is disordered; the sequence is MMTSNILSRF…GVKWSLGQPN (197 aa). Over 1–232 the chain is Cytoplasmic; the sequence is MMTSNILSRF…EVYSYFLGNG (232 aa). Composition is skewed to basic and acidic residues over residues 35–57, 75–85, and 129–139; these read VEERAGLTLEDGHGGHYTDHELQ, FLARESHHRVP, and EGHHDDEDLKS. The chain crosses the membrane as a helical span at residues 233 to 253; sequence IWSILLTRVLSLLTFAFVVGF. Residues 254-289 lie on the Lumenal side of the membrane; sequence STFLTNCVNYHKVRGSKTLDDILVDRCTTKMSLSST. The chain crosses the membrane as a helical span at residues 290–310; the sequence is FLLWLLTFFWIGKAFQCLLGI. At 311-431 the chain is on the cytoplasmic side; it reads RRLKHMHDFY…NLCIMDYVFN (121 aa). The stretch at 432–477 is an intramembrane region; the sequence is EQGQVRTLFLKDTHRKALSEGLRRRFIFAGFMNIFVAPFIVVYFMM. The Cytoplasmic portion of the chain corresponds to 478–542; the sequence is HYFFRYFNEY…DQFPKDKTVQ (65 aa). Residues 543–563 form a helical membrane-spanning segment; it reads VAGFVAFVSGALASVLALASV. Topologically, residues 564 to 578 are lumenal; it reads VDPELFLGFEITHDR. Residues 579–599 form a helical membrane-spanning segment; the sequence is TVLFYLGVFGSVWAVARGMVP. The Cytoplasmic portion of the chain corresponds to 600–645; sequence EETNVFDPEYALLEVINYTHYFPSQWKGRLHSDEVRREFAELYQMK. An intramembrane segment occupies 646-666; sequence IVIFLEEILSMIFTPFILWFS. At 667 to 949 the chain is on the cytoplasmic side; sequence LPRCSDRLID…DGRGRTAVGL (283 aa). Residues 748–919 are disordered; the sequence is GAHPSTKRQF…DAGAGGENAD (172 aa).

Belongs to the ATG9 family. Homotrimer; forms a homotrimer with a central pore that forms a path between the two membrane leaflets. Post-translationally, phosphorylated by atg1. Atg1 phosphorylation is required for preautophagosome elongation.

Its subcellular location is the preautophagosomal structure membrane. It is found in the cytoplasmic vesicle membrane. The protein resides in the golgi apparatus membrane. It localises to the endoplasmic reticulum membrane. The catalysed reaction is a 1,2-diacyl-sn-glycero-3-phosphocholine(in) = a 1,2-diacyl-sn-glycero-3-phosphocholine(out). It carries out the reaction a 1,2-diacyl-sn-glycero-3-phospho-L-serine(in) = a 1,2-diacyl-sn-glycero-3-phospho-L-serine(out). The enzyme catalyses a 1,2-diacyl-sn-glycero-3-phosphoethanolamine(in) = a 1,2-diacyl-sn-glycero-3-phosphoethanolamine(out). It catalyses the reaction a 1,2-diacyl-sn-glycero-3-phospho-(1D-myo-inositol-3-phosphate)(in) = a 1,2-diacyl-sn-glycero-3-phospho-(1D-myo-inositol-3-phosphate)(out). Functionally, phospholipid scramblase involved in autophagy and cytoplasm to vacuole transport (Cvt) vesicle formation. Cycles between the preautophagosomal structure/phagophore assembly site (PAS) and the cytoplasmic vesicle pool and supplies membrane for the growing autophagosome. Lipid scramblase activity plays a key role in preautophagosomal structure/phagophore assembly by distributing the phospholipids that arrive through atg2 from the cytoplasmic to the luminal leaflet of the bilayer, thereby driving autophagosomal membrane expansion. Required for mitophagy. Also involved in endoplasmic reticulum-specific autophagic process and is essential for the survival of cells subjected to severe ER stress. Different machineries are required for anterograde trafficking to the PAS during either the Cvt pathway or bulk autophagy and for retrograde trafficking. This is Autophagy-related protein 9 (atg9) from Aspergillus clavatus (strain ATCC 1007 / CBS 513.65 / DSM 816 / NCTC 3887 / NRRL 1 / QM 1276 / 107).